Here is a 349-residue protein sequence, read N- to C-terminus: UDP-N-acetylenolpyruvoylglucosamine reductase (349 aa).

The FAD-binding PCMH-type domain occupies 24 to 197 (FGIAATARFA…VSVTFRLPKQ (174 aa)). The active site involves R173. Catalysis depends on S249, which acts as the Proton donor. E345 is a catalytic residue.

The protein belongs to the MurB family. The cofactor is FAD.

Its subcellular location is the cytoplasm. It catalyses the reaction UDP-N-acetyl-alpha-D-muramate + NADP(+) = UDP-N-acetyl-3-O-(1-carboxyvinyl)-alpha-D-glucosamine + NADPH + H(+). The protein operates within cell wall biogenesis; peptidoglycan biosynthesis. In terms of biological role, cell wall formation. The polypeptide is UDP-N-acetylenolpyruvoylglucosamine reductase (Burkholderia lata (strain ATCC 17760 / DSM 23089 / LMG 22485 / NCIMB 9086 / R18194 / 383)).